The sequence spans 240 residues: Purine nucleoside phosphorylase DeoD-type (240 aa).

His-5 contacts a purine D-ribonucleoside. Phosphate contacts are provided by residues Gly-21, Arg-25, Arg-44, and 88 to 91; that span reads RVGS. A purine D-ribonucleoside-binding positions include 180-182 and 204-205; these read EME and SD. Asp-205 serves as the catalytic Proton donor.

This sequence belongs to the PNP/UDP phosphorylase family. Homohexamer; trimer of homodimers.

The catalysed reaction is a purine D-ribonucleoside + phosphate = a purine nucleobase + alpha-D-ribose 1-phosphate. The enzyme catalyses a purine 2'-deoxy-D-ribonucleoside + phosphate = a purine nucleobase + 2-deoxy-alpha-D-ribose 1-phosphate. Functionally, catalyzes the reversible phosphorolytic breakdown of the N-glycosidic bond in the beta-(deoxy)ribonucleoside molecules, with the formation of the corresponding free purine bases and pentose-1-phosphate. This is Purine nucleoside phosphorylase DeoD-type from Actinobacillus pleuropneumoniae serotype 5b (strain L20).